We begin with the raw amino-acid sequence, 436 residues long: GTPase Der (436 aa).

2 consecutive EngA-type G domains span residues 4–167 and 175–351; these read PVVA…PKDA and IKFS…DNHE. Residues 10 to 17, 57 to 61, 119 to 122, 181 to 188, 229 to 233, and 294 to 297 contribute to the GTP site; these read GRPNVGKS, DTGGI, NKVD, DTAGI, and NKWD. Residues 352 to 436 form the KH-like domain; it reads QRISSAVLND…PIHIIERRRK (85 aa).

This sequence belongs to the TRAFAC class TrmE-Era-EngA-EngB-Septin-like GTPase superfamily. EngA (Der) GTPase family. Associates with the 50S ribosomal subunit.

In terms of biological role, GTPase that plays an essential role in the late steps of ribosome biogenesis. The protein is GTPase Der of Ligilactobacillus salivarius (strain UCC118) (Lactobacillus salivarius).